The chain runs to 224 residues: Phosphoribosylformylglycinamidine synthase subunit PurQ (224 aa).

The 221-residue stretch at 4–224 (RIGVITFPGT…YSALDSVLAS (221 aa)) folds into the Glutamine amidotransferase type-1 domain. Residue C87 is the Nucleophile of the active site. Active-site residues include H195 and E197.

In terms of assembly, part of the FGAM synthase complex composed of 1 PurL, 1 PurQ and 2 PurS subunits.

It is found in the cytoplasm. The catalysed reaction is N(2)-formyl-N(1)-(5-phospho-beta-D-ribosyl)glycinamide + L-glutamine + ATP + H2O = 2-formamido-N(1)-(5-O-phospho-beta-D-ribosyl)acetamidine + L-glutamate + ADP + phosphate + H(+). The enzyme catalyses L-glutamine + H2O = L-glutamate + NH4(+). It participates in purine metabolism; IMP biosynthesis via de novo pathway; 5-amino-1-(5-phospho-D-ribosyl)imidazole from N(2)-formyl-N(1)-(5-phospho-D-ribosyl)glycinamide: step 1/2. Part of the phosphoribosylformylglycinamidine synthase complex involved in the purines biosynthetic pathway. Catalyzes the ATP-dependent conversion of formylglycinamide ribonucleotide (FGAR) and glutamine to yield formylglycinamidine ribonucleotide (FGAM) and glutamate. The FGAM synthase complex is composed of three subunits. PurQ produces an ammonia molecule by converting glutamine to glutamate. PurL transfers the ammonia molecule to FGAR to form FGAM in an ATP-dependent manner. PurS interacts with PurQ and PurL and is thought to assist in the transfer of the ammonia molecule from PurQ to PurL. The sequence is that of Phosphoribosylformylglycinamidine synthase subunit PurQ from Mycobacterium leprae (strain TN).